Here is a 212-residue protein sequence, read N- to C-terminus: Ras-related protein Rab-15 (212 aa).

Positions 17, 18, 19, 20, 21, 22, 23, 35, 39, and 40 each coordinate GTP. A Mg(2+)-binding site is contributed by Thr-22. 2 short sequence motifs (switch) span residues 31–45 (NEFH…GVDF) and 63–80 (DTAG…YYRR). Mg(2+)-binding residues include Thr-40 and Asp-63. GTP is bound by residues Gly-66, Asn-121, Lys-122, Asp-124, Ser-151, and Ala-152. A disordered region spans residues 193–212 (LEEEEGKPEGPANSSKTCWC). S-geranylgeranyl cysteine attachment occurs at residues Cys-210 and Cys-212. Cysteine methyl ester is present on Cys-212.

This sequence belongs to the small GTPase superfamily. Rab family. As to quaternary structure, the GTP bound form of RAB15 interacts with REP15. Interacts (GTP-bound form) with MICAL1, MICAL3, MICALCL, EHBP1 and EHBP1L1. It depends on Mg(2+) as a cofactor.

It localises to the cell membrane. The catalysed reaction is GTP + H2O = GDP + phosphate + H(+). Regulated by guanine nucleotide exchange factors (GEFs) which promote the exchange of bound GDP for free GTP. Regulated by GTPase activating proteins (GAPs) which increase the GTP hydrolysis activity. Inhibited by GDP dissociation inhibitors (GDIs). In terms of biological role, the small GTPases Rab are key regulators of intracellular membrane trafficking, from the formation of transport vesicles to their fusion with membranes. Rabs cycle between an inactive GDP-bound form and an active GTP-bound form that is able to recruit to membranes different sets of downstream effectors directly responsible for vesicle formation, movement, tethering and fusion. RAB15 may act in concert with RAB3A in regulating aspects of synaptic vesicle membrane flow within the nerve terminal. The sequence is that of Ras-related protein Rab-15 from Homo sapiens (Human).